The sequence spans 238 residues: COMM domain-containing protein 10 homolog Vlet (238 aa).

The segment covering 43 to 77 has biased composition (low complexity); that stretch reads ASASATSSTVGTSVTTTGRVDSSTEENPTSNTEPE. Residues 43 to 78 are disordered; sequence ASASATSSTVGTSVTTTGRVDSSTEENPTSNTEPEY. Positions 161–225 constitute a COMM domain; it reads VIEDVAWKLN…SIQGELDAML (65 aa).

It belongs to the COMM domain-containing protein 10 family. As to quaternary structure, component of the commander complex consisting of the CCC subcomplex and the retriever subcomplex. Component of the CCC subcomplex. Interacts with Smn; along with Sbat and Hez may form an accessory subcomplex involved in SMN complex function.

Its function is as follows. Scaffold protein in the commander complex that is essential for endosomal recycling of transmembrane cargos; the commander complex is composed of the CCC subcomplex and the retriever subcomplex. May modulate activity of cullin-RING E3 ubiquitin ligase (CRL) complexes. May down-regulate activation of NF-kappa-B. May have an accessory function in the survival motor neuron (SMN) complex. Required for neuromuscular function and organismal viability. The polypeptide is COMM domain-containing protein 10 homolog Vlet (Drosophila melanogaster (Fruit fly)).